Consider the following 363-residue polypeptide: Trans-2,3-enoyl-CoA reductase-like (363 aa).

A Phosphoserine modification is found at Ser-37. A run of 3 helical transmembrane segments spans residues 143–163 (WTTVFLAEYTGPLLIYLLFYL), 217–237 (LIMSCAFYWGFTSWIAYYINH), and 311–331 (ISFTVMTQTLPVGIFTLLMSI).

The protein belongs to the steroid 5-alpha reductase family. In terms of tissue distribution, predominantly expressed in the heart and skeletal muscle.

Its subcellular location is the membrane. The protein localises to the endoplasmic reticulum. This is Trans-2,3-enoyl-CoA reductase-like (TECRL) from Homo sapiens (Human).